A 227-amino-acid chain; its full sequence is Cytochrome c oxidase subunit 2 (227 aa).

The Mitochondrial intermembrane segment spans residues 1–26 (MNTWMNFNLQNSNSPLMEQLMFFHNH). The chain crosses the membrane as a helical span at residues 27–48 (SMLIILLITILVGYIMSSLLYN). Residues 49 to 62 (KLYNRYLLESQNVE) are Mitochondrial matrix-facing. A helical membrane pass occupies residues 63–82 (IIWTILPAFMLIFIALPSLR). Residues 83 to 227 (LLYLLDDSNS…SFIKWISSNS (145 aa)) lie on the Mitochondrial intermembrane side of the membrane. Positions 161, 196, 198, 200, 204, and 207 each coordinate Cu cation. Glu-198 is a binding site for Mg(2+).

It belongs to the cytochrome c oxidase subunit 2 family. As to quaternary structure, component of the cytochrome c oxidase (complex IV, CIV), a multisubunit enzyme composed of a catalytic core of 3 subunits and several supernumerary subunits. The complex exists as a monomer or a dimer and forms supercomplexes (SCs) in the inner mitochondrial membrane with ubiquinol-cytochrome c oxidoreductase (cytochrome b-c1 complex, complex III, CIII). Cu cation is required as a cofactor.

It is found in the mitochondrion inner membrane. The catalysed reaction is 4 Fe(II)-[cytochrome c] + O2 + 8 H(+)(in) = 4 Fe(III)-[cytochrome c] + 2 H2O + 4 H(+)(out). Functionally, component of the cytochrome c oxidase, the last enzyme in the mitochondrial electron transport chain which drives oxidative phosphorylation. The respiratory chain contains 3 multisubunit complexes succinate dehydrogenase (complex II, CII), ubiquinol-cytochrome c oxidoreductase (cytochrome b-c1 complex, complex III, CIII) and cytochrome c oxidase (complex IV, CIV), that cooperate to transfer electrons derived from NADH and succinate to molecular oxygen, creating an electrochemical gradient over the inner membrane that drives transmembrane transport and the ATP synthase. Cytochrome c oxidase is the component of the respiratory chain that catalyzes the reduction of oxygen to water. Electrons originating from reduced cytochrome c in the intermembrane space (IMS) are transferred via the dinuclear copper A center (CU(A)) of subunit 2 and heme A of subunit 1 to the active site in subunit 1, a binuclear center (BNC) formed by heme A3 and copper B (CU(B)). The BNC reduces molecular oxygen to 2 water molecules using 4 electrons from cytochrome c in the IMS and 4 protons from the mitochondrial matrix. This chain is Cytochrome c oxidase subunit 2 (COII), found in Ctenocephalides felis (Cat flea).